The following is a 365-amino-acid chain: MAKRIVGSTPKQDGFRMPGEFEPQEKVWMIWPERPDNWRDGGKPVQEAFTNVAKAISQFTPMNVVVSQQQFQNCRRQLPPEITVYEMSNNDAWVRDCGPSFVINDHGEIRGVDWTFNAWGGLVDGLYFPWDQDDLVAQKICEIEHVDSYRTDDFVLEGGSFHVDGQGTVLTTEMCLLSEGRNPQLSKEAIEQKLCDYLNVEKVLWLGDGIDPEETNGHVDDVACFIAPGEVACIYTEDQNSPFYEAAQDAYQRLLKMTDAKGRQLKVHKLCCPVKNVTIKGSFKIDFVEGTMPREDGDICIASYMNFLITNDGVIVPQYGDENDHLALEQVQTMFPDKKIVGVNTVEVVYGGGNIHCITQQEPKR.

Agmatine-binding residues include Glu214 and Asp220. The active-site Amidino-cysteine intermediate is Cys357.

The protein belongs to the agmatine deiminase family. Tetramer of two homodimers.

It catalyses the reaction agmatine + H2O = N-carbamoylputrescine + NH4(+). This chain is Putative agmatine deiminase, found in Enterococcus faecalis (strain ATCC 700802 / V583).